We begin with the raw amino-acid sequence, 402 residues long: Dynactin subunit 2 (402 aa).

The tract at residues 1 to 24 (MADPKYADLPGIARNEPDVYETSD) is disordered. Alanine 2 is modified (N-acetylalanine). Phosphotyrosine is present on tyrosine 6. At serine 83 the chain carries Phosphoserine. Tyrosine 86 bears the Phosphotyrosine mark. Residues 100–130 (QQKYQRLLHEVQELTTEVEKIKTTVKESATE) are a coiled coil. A phosphothreonine mark is found at threonine 134 and threonine 199. The tract at residues 185-205 (KSSKGSSGGKSTGGTPPDSSL) is disordered. Residues 215-247 (EQDKFSQAAKVAELEKRLTELEATVRCDQDAQN) are a coiled coil. Residue serine 321 is modified to Phosphoserine.

The protein belongs to the dynactin subunit 2 family. As to quaternary structure, subunit of dynactin, a multiprotein complex part of a tripartite complex with dynein and a adapter, such as BICDL1, BICD2 or HOOK3. The dynactin complex is built around ACTR1A/ACTB filament and consists of an actin-related filament composed of a shoulder domain, a pointed end and a barbed end. Its length is defined by its flexible shoulder domain. The soulder is composed of 2 DCTN1 subunits, 4 DCTN2 and 2 DCTN3. The 4 DCNT2 (via N-terminus) bind the ACTR1A filament and act as molecular rulers to determine the length. The pointed end is important for binding dynein-dynactin cargo adapters and consists of 4 subunits: ACTR10, DCNT4, DCTN5 and DCTN6. The barbed end is composed of a CAPZA1:CAPZB heterodimers, which binds ACTR1A/ACTB filament and dynactin and stabilizes dynactin. Interacts with BICD2 and CEP135. Interacts with DYNAP. Interacts with ECPAS. Interacts with MAPRE1.

The protein localises to the cytoplasm. It is found in the cytoskeleton. Its subcellular location is the microtubule organizing center. The protein resides in the centrosome. It localises to the membrane. Part of the dynactin complex that activates the molecular motor dynein for ultra-processive transport along microtubules. In the dynactin soulder domain, binds the ACTR1A filament and acts as a molecular ruler to determine the length. Modulates cytoplasmic dynein binding to an organelle, and plays a role in prometaphase chromosome alignment and spindle organization during mitosis. Involved in anchoring microtubules to centrosomes. May play a role in synapse formation during brain development. This is Dynactin subunit 2 (Dctn2) from Rattus norvegicus (Rat).